Reading from the N-terminus, the 258-residue chain is Ribosomal RNA large subunit methyltransferase E (258 aa).

S-adenosyl-L-methionine-binding residues include Gly58, Trp60, Asp78, Asp96, and Asp120. Lys160 functions as the Proton acceptor in the catalytic mechanism.

It belongs to the class I-like SAM-binding methyltransferase superfamily. RNA methyltransferase RlmE family.

Its subcellular location is the cytoplasm. It catalyses the reaction uridine(2552) in 23S rRNA + S-adenosyl-L-methionine = 2'-O-methyluridine(2552) in 23S rRNA + S-adenosyl-L-homocysteine + H(+). Specifically methylates the uridine in position 2552 of 23S rRNA at the 2'-O position of the ribose in the fully assembled 50S ribosomal subunit. This is Ribosomal RNA large subunit methyltransferase E from Methanococcus maripaludis (strain DSM 14266 / JCM 13030 / NBRC 101832 / S2 / LL).